Reading from the N-terminus, the 332-residue chain is Glycerol-3-phosphate dehydrogenase [NAD(P)+] (332 aa).

NADPH is bound by residues S15, W16, and K110. Positions 110, 137, and 139 each coordinate sn-glycerol 3-phosphate. A141 serves as a coordination point for NADPH. The sn-glycerol 3-phosphate site is built by K192, D245, S255, R256, and N257. K192 functions as the Proton acceptor in the catalytic mechanism. R256 contributes to the NADPH binding site. Residue E282 coordinates NADPH.

The protein belongs to the NAD-dependent glycerol-3-phosphate dehydrogenase family.

The protein resides in the cytoplasm. It catalyses the reaction sn-glycerol 3-phosphate + NAD(+) = dihydroxyacetone phosphate + NADH + H(+). It carries out the reaction sn-glycerol 3-phosphate + NADP(+) = dihydroxyacetone phosphate + NADPH + H(+). It participates in membrane lipid metabolism; glycerophospholipid metabolism. Its function is as follows. Catalyzes the reduction of the glycolytic intermediate dihydroxyacetone phosphate (DHAP) to sn-glycerol 3-phosphate (G3P), the key precursor for phospholipid synthesis. The sequence is that of Glycerol-3-phosphate dehydrogenase [NAD(P)+] from Coxiella burnetii (strain RSA 331 / Henzerling II).